The primary structure comprises 332 residues: Probable allantoicase (332 aa).

Belongs to the allantoicase family.

It catalyses the reaction allantoate + H2O = (S)-ureidoglycolate + urea. It participates in nitrogen metabolism; (S)-allantoin degradation; (S)-ureidoglycolate from allantoate (aminidohydrolase route): step 1/1. The polypeptide is Probable allantoicase (Pseudomonas paraeruginosa (strain DSM 24068 / PA7) (Pseudomonas aeruginosa (strain PA7))).